A 28-amino-acid chain; its full sequence is GLMDMVKGAAKNLFASALDTLKCKITGC.

C23 and C28 are disulfide-bonded.

Expressed by the skin glands.

The protein resides in the secreted. Its function is as follows. Has antibacterial activity. This is Ranatuerin-2AVb from Rana arvalis (Moor frog).